Consider the following 270-residue polypeptide: MTSGAPDLLIDAGNSRIKWALVTADGSQIAAGALPHSGADQPDWSDLPTPCRAWLSNVAGENVAARIAASLDARWPQLPLTTIRACAQQCGVTNSYTTPQALGSDRWAGMIGAHAAFLGEHLLIATFGTATTLEALRADGCFVGGLIAPGWSLMMRSLGEHTAQLPTLDAHAARGLLDGSIAAAGRSGPFFATDTPRSLSAGCTLAQAGLVERMWRDLQDEWQVPVRLVVSGGAVDEVASALKVPHTRHDSLVLSGLALIAAERALERGN.

Residue 11-18 (DAGNSRIK) participates in ATP binding. Substrate contacts are provided by residues Tyr96 and 103-106 (GSDR). Asp105 functions as the Proton acceptor in the catalytic mechanism. Residue Thr129 participates in ATP binding. Thr195 serves as a coordination point for substrate.

The protein belongs to the type III pantothenate kinase family. Homodimer. The cofactor is NH4(+). K(+) serves as cofactor.

The protein resides in the cytoplasm. The enzyme catalyses (R)-pantothenate + ATP = (R)-4'-phosphopantothenate + ADP + H(+). It participates in cofactor biosynthesis; coenzyme A biosynthesis; CoA from (R)-pantothenate: step 1/5. In terms of biological role, catalyzes the phosphorylation of pantothenate (Pan), the first step in CoA biosynthesis. The sequence is that of Type III pantothenate kinase from Paraburkholderia phytofirmans (strain DSM 17436 / LMG 22146 / PsJN) (Burkholderia phytofirmans).